The following is an 86-amino-acid chain: Gas vesicle protein A1 (86 aa).

It belongs to the gas vesicle GvpA family. The gas vesicle shell is 2 nm thick and consists of a single layer of this protein. It forms helical ribs nearly perpendicular to the long axis of the vesicle.

It is found in the gas vesicle shell. Gas vesicles are hollow, gas filled proteinaceous nanostructures found in some microorganisms. During planktonic growth they allow positioning of the organism at a favorable depth for light or nutrient acquisition. GvpA forms the protein shell. In terms of biological role, it is not clear if the 2 type A proteins in this organism are functionally redundant. Functionally, when the full gvp locus (gvpA1-gvpP-gvpQ-gvpA2-gvpR-gvpN-gvpF-gvpG-gvpL-gvpS-gvpK-gvpJ-gvpT-gvpU, called pNL26) is expressed in E.coli gas vesicles are made. The chain is Gas vesicle protein A1 from Priestia megaterium (Bacillus megaterium).